An 819-amino-acid chain; its full sequence is Outer membrane usher protein CssD (819 aa).

This sequence belongs to the fimbrial export usher family.

It localises to the cell outer membrane. Functionally, involved in the export and assembly of C6 fimbrial subunits across the outer membrane. The protein is Outer membrane usher protein CssD (cssD) of Escherichia coli.